Here is a 138-residue protein sequence, read N- to C-terminus: Basic phospholipase A2 Mtx-b (138 aa).

Positions 1-16 (MRALWIVAVLLVGVEG) are cleaved as a signal peptide. Cystine bridges form between Cys42/Cys131, Cys44/Cys60, Cys59/Cys111, Cys65/Cys138, Cys66/Cys104, Cys73/Cys97, and Cys91/Cys102. Ca(2+) is bound by residues Tyr43, Gly45, and Gly47. His63 is an active-site residue. Ca(2+) is bound at residue Asp64. Asp105 is a catalytic residue.

In terms of assembly, heterodimer of an acidic subunit and a basic chain. The acidic subunit is non-toxic, without enzymatic activity and comprises 3 peptides that are cross-linked by 7 disulfide bridges. The basic subunit is toxic, has phospholipase A2 activity and is composed of a single chain. Ca(2+) is required as a cofactor. Expressed by the venom gland.

It localises to the secreted. The enzyme catalyses a 1,2-diacyl-sn-glycero-3-phosphocholine + H2O = a 1-acyl-sn-glycero-3-phosphocholine + a fatty acid + H(+). Its function is as follows. Snake venom phospholipase A2 (PLA2) that inhibits neuromuscular transmission by blocking acetylcholine release from the nerve termini. PLA2 catalyzes the calcium-dependent hydrolysis of the 2-acyl groups in 3-sn-phosphoglycerides. In Crotalus scutulatus scutulatus (Mojave rattlesnake), this protein is Basic phospholipase A2 Mtx-b.